The primary structure comprises 156 residues: uncharacterized protein (156 aa).

Residues 43 to 84 adopt a coiled-coil conformation; it reads LKIDENEVKLEISVEKLKNLSRVCENIEQVVDKVVEELRYAL.

This is an uncharacterized protein from Aquifex aeolicus (strain VF5).